Reading from the N-terminus, the 458-residue chain is Argininosuccinate lyase (458 aa).

This sequence belongs to the lyase 1 family. Argininosuccinate lyase subfamily.

Its subcellular location is the cytoplasm. It carries out the reaction 2-(N(omega)-L-arginino)succinate = fumarate + L-arginine. It functions in the pathway amino-acid biosynthesis; L-arginine biosynthesis; L-arginine from L-ornithine and carbamoyl phosphate: step 3/3. The polypeptide is Argininosuccinate lyase (Salmonella choleraesuis (strain SC-B67)).